The primary structure comprises 314 residues: 2,3-dihydroxyphenylpropionate/2,3-dihydroxicinnamic acid 1,2-dioxygenase (314 aa).

Histidine 115 (proton donor) is an active-site residue. The active-site Proton acceptor is the histidine 179.

Belongs to the LigB/MhpB extradiol dioxygenase family. In terms of assembly, homotetramer. It depends on Fe(2+) as a cofactor.

It carries out the reaction 3-(2,3-dihydroxyphenyl)propanoate + O2 = (2Z,4E)-2-hydroxy-6-oxonona-2,4-dienedioate + H(+). The catalysed reaction is (2E)-3-(2,3-dihydroxyphenyl)prop-2-enoate + O2 = (2Z,4E,7E)-2-hydroxy-6-oxonona-2,4,7-trienedioate + H(+). The protein operates within aromatic compound metabolism; 3-phenylpropanoate degradation. In terms of biological role, catalyzes the non-heme iron(II)-dependent oxidative cleavage of 2,3-dihydroxyphenylpropionic acid and 2,3-dihydroxicinnamic acid into 2-hydroxy-6-ketononadienedioate and 2-hydroxy-6-ketononatrienedioate, respectively. In Escherichia coli (strain 55989 / EAEC), this protein is 2,3-dihydroxyphenylpropionate/2,3-dihydroxicinnamic acid 1,2-dioxygenase.